The sequence spans 234 residues: Demethylmenaquinone methyltransferase (234 aa).

S-adenosyl-L-methionine is bound by residues threonine 58, aspartate 79, and 104-105 (NA).

Belongs to the class I-like SAM-binding methyltransferase superfamily. MenG/UbiE family.

It carries out the reaction a 2-demethylmenaquinol + S-adenosyl-L-methionine = a menaquinol + S-adenosyl-L-homocysteine + H(+). Its pathway is quinol/quinone metabolism; menaquinone biosynthesis; menaquinol from 1,4-dihydroxy-2-naphthoate: step 2/2. Functionally, methyltransferase required for the conversion of demethylmenaquinol (DMKH2) to menaquinol (MKH2). This is Demethylmenaquinone methyltransferase from Lysinibacillus sphaericus (strain C3-41).